The chain runs to 199 residues: Acireductone dioxygenase 3 (199 aa).

The Fe(2+) site is built by histidine 99, histidine 101, glutamate 105, and histidine 144. 4 residues coordinate Ni(2+): histidine 99, histidine 101, glutamate 105, and histidine 144.

Belongs to the acireductone dioxygenase (ARD) family. The cofactor is Fe(2+). Ni(2+) is required as a cofactor.

It is found in the cytoplasm. The protein localises to the nucleus. The catalysed reaction is 1,2-dihydroxy-5-(methylsulfanyl)pent-1-en-3-one + O2 = 4-methylsulfanyl-2-oxobutanoate + formate + 2 H(+). It catalyses the reaction 1,2-dihydroxy-5-(methylsulfanyl)pent-1-en-3-one + O2 = 3-(methylsulfanyl)propanoate + CO + formate + 2 H(+). It participates in amino-acid biosynthesis; L-methionine biosynthesis via salvage pathway; L-methionine from S-methyl-5-thio-alpha-D-ribose 1-phosphate: step 5/6. Its function is as follows. Catalyzes 2 different reactions between oxygen and the acireductone 1,2-dihydroxy-3-keto-5-methylthiopentene (DHK-MTPene) depending upon the metal bound in the active site. Fe-containing acireductone dioxygenase (Fe-ARD) produces formate and 2-keto-4-methylthiobutyrate (KMTB), the alpha-ketoacid precursor of methionine in the methionine recycle pathway. Ni-containing acireductone dioxygenase (Ni-ARD) produces methylthiopropionate, carbon monoxide and formate, and does not lie on the methionine recycle pathway. This chain is Acireductone dioxygenase 3 (ARD3), found in Arabidopsis thaliana (Mouse-ear cress).